A 237-amino-acid polypeptide reads, in one-letter code: Phosphatidylserine decarboxylase proenzyme (237 aa).

Ser206 acts as the Schiff-base intermediate with substrate; via pyruvic acid in catalysis. Ser206 is subject to Pyruvic acid (Ser); by autocatalysis.

This sequence belongs to the phosphatidylserine decarboxylase family. PSD-A subfamily. Heterodimer of a large membrane-associated beta subunit and a small pyruvoyl-containing alpha subunit. Pyruvate is required as a cofactor. Is synthesized initially as an inactive proenzyme. Formation of the active enzyme involves a self-maturation process in which the active site pyruvoyl group is generated from an internal serine residue via an autocatalytic post-translational modification. Two non-identical subunits are generated from the proenzyme in this reaction, and the pyruvate is formed at the N-terminus of the alpha chain, which is derived from the carboxyl end of the proenzyme. The post-translation cleavage follows an unusual pathway, termed non-hydrolytic serinolysis, in which the side chain hydroxyl group of the serine supplies its oxygen atom to form the C-terminus of the beta chain, while the remainder of the serine residue undergoes an oxidative deamination to produce ammonia and the pyruvoyl prosthetic group on the alpha chain.

It is found in the cell membrane. The enzyme catalyses a 1,2-diacyl-sn-glycero-3-phospho-L-serine + H(+) = a 1,2-diacyl-sn-glycero-3-phosphoethanolamine + CO2. It functions in the pathway phospholipid metabolism; phosphatidylethanolamine biosynthesis; phosphatidylethanolamine from CDP-diacylglycerol: step 2/2. Catalyzes the formation of phosphatidylethanolamine (PtdEtn) from phosphatidylserine (PtdSer). The polypeptide is Phosphatidylserine decarboxylase proenzyme (Nocardia farcinica (strain IFM 10152)).